The following is a 1663-amino-acid chain: Cortactin-binding protein 2 (1663 aa).

5 disordered regions span residues 1–26, 203–225, 359–440, 454–478, and 497–615; these read MATD…TAEA, KKKT…DMEA, QASH…LHPG, GNAN…SPTS, and SRFT…PPKP. Positions 119–276 form a coiled coil; the sequence is RKMQERMSTQ…EQLKRGSDSK (158 aa). Composition is skewed to polar residues over residues 385-396 and 418-435; these read GPSTDSAPDLTN and QSHS…SANA. Arginine 498 is subject to Asymmetric dimethylarginine. A compositionally biased stretch (pro residues) spans 606 to 615; that stretch reads PTTPQLPPKP. 6 ANK repeats span residues 709–739, 743–772, 776–805, 809–838, 842–871, and 912–942; these read GRPT…DINY, DGHS…QVDA, NGFT…DINH, GGQT…DRSV, DGWT…PARG, and EGWT…EPDR. The disordered stretch occupies residues 1449-1490; that stretch reads KGENGTWRKVSTSPRKKSGHFSSPTWNKPDLNEEGIRNTTTS. At serine 1524 the chain carries Phosphoserine. The segment at 1579 to 1663 is disordered; it reads VSEKEVSPLS…KNEQVEKPNK (85 aa). The span at 1586-1595 shows a compositional bias: polar residues; it reads PLSSHQTTEC. Low complexity predominate over residues 1624 to 1638; sequence SQNTKRSSSSSNTRQ. Positions 1645 to 1663 are enriched in basic and acidic residues; it reads SKEEIWNLHKNEQVEKPNK.

In terms of assembly, interacts with CTTN/cortactin SH3 domain. Interacts with STRN, STRN4/zinedin and MOB4/phocein; this interactions mediate the association with the STRIPAK core complex and may regulate dendritic spine distribution of the STRIPAK complex in hippocampal neurons. Activation of glutamate receptors weakens the interaction with STRN and STRN4.

The protein localises to the cytoplasm. Its subcellular location is the cell cortex. It is found in the cell projection. It localises to the dendritic spine. Its function is as follows. Regulates the dendritic spine distribution of CTTN/cortactin in hippocampal neurons, and thus controls dendritic spinogenesis and dendritic spine maintenance. Associates with the striatin-interacting phosphatase and kinase (STRIPAK) core complex to regulate dendritic spine distribution of the STRIPAK complex in hippocampal neurons. The protein is Cortactin-binding protein 2 (CTTNBP2) of Rhinolophus ferrumequinum (Greater horseshoe bat).